The sequence spans 392 residues: Selenide, water dikinase 1 (392 aa).

Cys31 is an active-site residue. Residues Lys32, 67–69 (GMD), Asp87, Asp110, and 161–164 (GGQT) each bind ATP. Asp69 lines the Mg(2+) pocket. Asp110 is a Mg(2+) binding site. Residue Asp265 coordinates Mg(2+).

Belongs to the selenophosphate synthase 1 family. Class II subfamily. Homodimer. Mg(2+) serves as cofactor.

It is found in the cell membrane. The protein localises to the nucleus membrane. It carries out the reaction hydrogenselenide + ATP + H2O = selenophosphate + AMP + phosphate + 2 H(+). Its function is as follows. Synthesizes selenophosphate from selenide and ATP. This is Selenide, water dikinase 1 (sephs1) from Xenopus laevis (African clawed frog).